The following is a 564-amino-acid chain: Septation ring formation regulator EzrA (564 aa).

Residues 1–4 (MVLY) are Extracellular-facing. Residues 5 to 23 (IILAIIVIILIAVGVLFYL) traverse the membrane as a helical segment. The Cytoplasmic portion of the chain corresponds to 24 to 564 (RSNKRQIIEK…KHIEEEVIKQ (541 aa)). 5 coiled-coil regions span residues 99–138 (SFNA…YKDN), 190–223 (DGNY…LIRE), 271–300 (LISR…LIEH), 350–435 (VRQF…RRLL), and 471–550 (VKQL…ESVE).

This sequence belongs to the EzrA family.

It is found in the cell membrane. Negative regulator of FtsZ ring formation; modulates the frequency and position of FtsZ ring formation. Inhibits FtsZ ring formation at polar sites. Interacts either with FtsZ or with one of its binding partners to promote depolymerization. This chain is Septation ring formation regulator EzrA, found in Staphylococcus aureus (strain NCTC 8325 / PS 47).